We begin with the raw amino-acid sequence, 946 residues long: Leucine--tRNA ligase (946 aa).

The 'HIGH' region motif lies at 43 to 53 (PYPNGTIHIGH). Residues 638–642 (KMSKS) carry the 'KMSKS' region motif. Position 641 (Lys641) interacts with ATP.

This sequence belongs to the class-I aminoacyl-tRNA synthetase family.

It is found in the cytoplasm. The catalysed reaction is tRNA(Leu) + L-leucine + ATP = L-leucyl-tRNA(Leu) + AMP + diphosphate. The sequence is that of Leucine--tRNA ligase from Pyrobaculum calidifontis (strain DSM 21063 / JCM 11548 / VA1).